The following is a 240-amino-acid chain: MPTLGVNIDHVATVRQARRTVEPDPIAAAVLAELAGAEGITAHLREDRRHIQDRDVRLLRQTVRTRLNLEMAATDEMVAIALDIRPDYVTLVPERREEVTTEGGLNVVGQRDRLALVVDQLQSAGIPVSLFIDAEPDQIAASAAIQAQWIELHTGRYAEAETEAAQAQELAALRQGCEQAIAAGLRVNAGHGLTYWNVYPVAQLPGMEELNIGHTIISRAVLVGLERAVREMKLAMQGKL.

Asparagine 7 serves as a coordination point for 3-amino-2-oxopropyl phosphate. 9 to 10 (DH) lines the 1-deoxy-D-xylulose 5-phosphate pocket. Arginine 18 serves as a coordination point for 3-amino-2-oxopropyl phosphate. Histidine 43 serves as the catalytic Proton acceptor. The 1-deoxy-D-xylulose 5-phosphate site is built by arginine 45 and histidine 50. Residue glutamate 70 is the Proton acceptor of the active site. 1-deoxy-D-xylulose 5-phosphate is bound at residue threonine 100. The active-site Proton donor is the histidine 191. 3-amino-2-oxopropyl phosphate is bound by residues glycine 192 and 213 to 214 (GH).

It belongs to the PNP synthase family. In terms of assembly, homooctamer; tetramer of dimers.

It is found in the cytoplasm. The catalysed reaction is 3-amino-2-oxopropyl phosphate + 1-deoxy-D-xylulose 5-phosphate = pyridoxine 5'-phosphate + phosphate + 2 H2O + H(+). It participates in cofactor biosynthesis; pyridoxine 5'-phosphate biosynthesis; pyridoxine 5'-phosphate from D-erythrose 4-phosphate: step 5/5. Its function is as follows. Catalyzes the complicated ring closure reaction between the two acyclic compounds 1-deoxy-D-xylulose-5-phosphate (DXP) and 3-amino-2-oxopropyl phosphate (1-amino-acetone-3-phosphate or AAP) to form pyridoxine 5'-phosphate (PNP) and inorganic phosphate. The chain is Pyridoxine 5'-phosphate synthase from Synechococcus elongatus (strain ATCC 33912 / PCC 7942 / FACHB-805) (Anacystis nidulans R2).